A 571-amino-acid polypeptide reads, in one-letter code: Acetolactate synthase large subunit (571 aa).

Glutamate 51 provides a ligand contact to thiamine diphosphate. Residues arginine 153, 261–282 (HGTYEANMAMHYSDVIFAIGVR), and 304–323 (DIDPTSISKTVSADIPIVGD) each bind FAD. A thiamine pyrophosphate binding region spans residues 394 to 474 (QHQMFTALYY…VLILNLNNSS (81 aa)). Positions 445 and 472 each coordinate Mg(2+).

It belongs to the TPP enzyme family. As to quaternary structure, dimer of large and small chains. Mg(2+) is required as a cofactor. It depends on thiamine diphosphate as a cofactor.

The catalysed reaction is 2 pyruvate + H(+) = (2S)-2-acetolactate + CO2. Its pathway is amino-acid biosynthesis; L-isoleucine biosynthesis; L-isoleucine from 2-oxobutanoate: step 1/4. It participates in amino-acid biosynthesis; L-valine biosynthesis; L-valine from pyruvate: step 1/4. This is Acetolactate synthase large subunit (ilvI) from Buchnera aphidicola subsp. Schizaphis graminum (strain Sg).